The primary structure comprises 20 residues: Thylakoid lumenal 18.4 kDa protein (20 aa).

The protein resides in the plastid. It localises to the chloroplast thylakoid lumen. This chain is Thylakoid lumenal 18.4 kDa protein, found in Spinacia oleracea (Spinach).